The following is a 312-amino-acid chain: Tumor necrosis factor receptor type 1-associated DEATH domain protein (312 aa).

The short motif at 147–163 (LRDEELAELEDALRNLK) is the Nuclear export signal element. A disordered region spans residues 170-195 (GGDGEVASAPLQPPVPSLSEVKPPPP). The Death domain occupies 179 to 289 (PLQPPVPSLS…ATLQRLVEAL (111 aa)). Residues 180-195 (LQPPVPSLSEVKPPPP) show a composition bias toward pro residues. The interval 222 to 289 (FARSVGLKWR…ATLQRLVEAL (68 aa)) is interaction with KRT14 and KRT18. The Nuclear localization signal signature appears at 231–244 (RKVGRSLQRGCRAL). R235 and R245 each carry a (Microbial infection) N-beta-linked (GlcNAc) arginine glycan.

In terms of assembly, stimulation of TNF-alpha receptor TNFRSF1A leads to the formation of two distinct signaling complexes. Plasma membrane-bound complex I is composed of TNFRSF1A, TRADD, RIPK1, TRAF2 and BIRC2/c-IAP1 or BIRC3 which interacts with CHUCK/IKK-alpha, IKBKB/IKK-beta and IKBKG/IKK-gamma promoting cell survival. Subsequently, TRADD, RIPK1 and TRAF2 dissociate from TNFRSF1A and form cytoplasmic complex II with FADD and caspase CASP8 promoting cell apoptosis. Within complex I, interacts with TNFRSF1A/TNFR1, TRAF2 and kinase RIPK1. Within complex I, interacts with TRPC4AP; the interaction promotes NF-kappa B activation. UXT1 associates with complex I; the interaction prevents the formation of complex II. Within complex I Interacts with scaffold protein DAB2IP. Interacts with autophagy receptor SQSTM1. Interacts with E3 ligase TRIP12. Interacts with kinase HIPK2. Interacts with keratin KRT14. Interacts with keratin KRT18. Interacts with keratins KRT16 and KRT17. Interacts with FADD. Interacts with TOMM70. Interacts with TMC8; the interaction impairs the formation of complex I and facilites complex II formation. (Microbial infection) Glycosylated at Arg-235 by enteropathogenic E.coli protein NleB1, C.rodentium protein NleB and S.typhimurium proteins Ssek1 and Ssek3: arginine GlcNAcylation prevents homotypic/heterotypic death domain interactions and assembly of the oligomeric TNFRSF1A/TNFR1 complex, thereby disrupting TNF signaling. Found in all examined tissues.

The protein resides in the nucleus. Its subcellular location is the cytoplasm. It is found in the cytoskeleton. Adapter molecule for TNFRSF1A/TNFR1 that specifically associates with the cytoplasmic domain of activated TNFRSF1A/TNFR1 mediating its interaction with FADD. Overexpression of TRADD leads to two major TNF-induced responses, apoptosis and activation of NF-kappa-B. The nuclear form acts as a tumor suppressor by preventing ubiquitination and degradation of isoform p19ARF/ARF of CDKN2A by TRIP12: acts by interacting with TRIP12, leading to disrupt interaction between TRIP12 and isoform p19ARF/ARF of CDKN2A. The sequence is that of Tumor necrosis factor receptor type 1-associated DEATH domain protein from Homo sapiens (Human).